The chain runs to 180 residues: Thioredoxin 3 (180 aa).

The Cytoplasmic segment spans residues 1–3 (MAL). The chain crosses the membrane as a helical; Signal-anchor for type II membrane protein span at residues 4–24 (ICIGSVCFSLFHIGVIILLII). The Lumenal segment spans residues 25 to 180 (NYFSSHIKKI…FQKYCLEKAK (156 aa)). A Thioredoxin domain is found at 29 to 176 (SHIKKIFPSF…IEKAFQKYCL (148 aa)). Residues cysteine 99 and cysteine 102 each act as nucleophile in the active site. Cysteines 99 and 102 form a disulfide.

It belongs to the thioredoxin family. The disulfide bond between Cys-99 and Cys-102 acts as a redox-active center and is reduced by thioredoxin reductase TRXR.

The protein resides in the endoplasmic reticulum membrane. Functionally, participates in various redox reactions through the reversible oxidation of its active center dithiol to a disulfide and catalyzes dithiol-disulfide exchange reactions. The sequence is that of Thioredoxin 3 from Plasmodium falciparum (isolate 3D7).